Here is a 474-residue protein sequence, read N- to C-terminus: C6 finger domain transcription factor aclZ (474 aa).

The zn(2)-C6 fungal-type DNA-binding region spans 42 to 69 (CNQCHAAKVRCSGERTGCDRCNNLQYQC). Disordered regions lie at residues 85-148 (RGNK…SHSA) and 177-206 (MSSD…DSHT). Polar residues predominate over residues 90-105 (VRTTTEALQRPATAST). The span at 117–138 (TDQRSENDPLSRSDFGEQDAAH) shows a compositional bias: basic and acidic residues.

The protein localises to the nucleus. Transcription factor that specifically regulates the gene cluster that mediates the biosynthesis of aspirochlorine (or antibiotic A30641), an unusual halogenated spiro compound with distinctive antifungal properties due to selective inhibition of protein biosynthesis, and which is also active against bacteria, viruses, and murine tumor cells. The chain is C6 finger domain transcription factor aclZ from Aspergillus oryzae (strain ATCC 42149 / RIB 40) (Yellow koji mold).